The chain runs to 434 residues: Protein trichome birefringence-like 3 (434 aa).

A helical; Signal-anchor for type II membrane protein membrane pass occupies residues 15 to 35 (IPLSIIVLVLCGFMFFILLYT). The GDS motif signature appears at 166–168 (GDS). The DCXHWCLPGXXDXWN motif motif lies at 413–427 (DCIHWCLPGLPDTWN).

The protein belongs to the PC-esterase family. TBL subfamily.

Its subcellular location is the golgi apparatus membrane. Functionally, involved in secondary cell wall cellulose deposition. Required for normal stem development. May act as a bridging protein that binds pectin and other cell wall polysaccharides. Probably involved in maintaining esterification of pectins. May be involved in the specific O-acetylation of cell wall polymers. The polypeptide is Protein trichome birefringence-like 3 (TBL3) (Arabidopsis thaliana (Mouse-ear cress)).